The sequence spans 327 residues: MREIKLNPDSLEIYEKSDSGKLNRNDLIDLWNLDLNDLLNISCALKKLFNKDKIDLCSIMNAKSGICPENCIFCSQSKHNTSKIDTYELKSKEEILKNAKSVEKYSNRFSIVVSGKTVTDLEFEKIIESIEEIQNKTKLKVCVSLGLLNKDKLKALKEKNVRIHNNLETSENYFKNICTSHDYNDKVKVILEAKKIGLEMCSGGIFGMGESIEDRVDLFLDLKKLGVDSVALNLLNPIYGTKIYEKIKFGVISPINSIDALKSICIARIALPDKVIRLCGGREHVLKDMQKYSLFALDGLMIGNYLTTNGQNIQSDLKMIKEMGFER.

In terms of domain architecture, Radical SAM core spans Phe-49–Asp-273. The [4Fe-4S] cluster site is built by Cys-67, Cys-71, and Cys-74. 4 residues coordinate [2Fe-2S] cluster: Ser-110, Cys-142, Cys-201, and Arg-277.

Belongs to the radical SAM superfamily. Biotin synthase family. In terms of assembly, homodimer. [4Fe-4S] cluster is required as a cofactor. [2Fe-2S] cluster serves as cofactor.

The enzyme catalyses (4R,5S)-dethiobiotin + (sulfur carrier)-SH + 2 reduced [2Fe-2S]-[ferredoxin] + 2 S-adenosyl-L-methionine = (sulfur carrier)-H + biotin + 2 5'-deoxyadenosine + 2 L-methionine + 2 oxidized [2Fe-2S]-[ferredoxin]. The protein operates within cofactor biosynthesis; biotin biosynthesis; biotin from 7,8-diaminononanoate: step 2/2. Catalyzes the conversion of dethiobiotin (DTB) to biotin by the insertion of a sulfur atom into dethiobiotin via a radical-based mechanism. This is Biotin synthase from Methanococcus maripaludis (strain C6 / ATCC BAA-1332).